Reading from the N-terminus, the 294-residue chain is Large ribosomal subunit protein uL2 (294 aa).

Disordered stretches follow at residues 1–37 (MGIR…RPEK) and 228–294 (GSVM…RAAQ). Positions 23–37 (ELSRDENGKRPRPEK) are enriched in basic and acidic residues. Residues 264 to 285 (KTRKRNKPSNKFIVRGRRRGGR) are compositionally biased toward basic residues.

This sequence belongs to the universal ribosomal protein uL2 family. Part of the 50S ribosomal subunit. Forms a bridge to the 30S subunit in the 70S ribosome.

One of the primary rRNA binding proteins. Required for association of the 30S and 50S subunits to form the 70S ribosome, for tRNA binding and peptide bond formation. It has been suggested to have peptidyltransferase activity; this is somewhat controversial. Makes several contacts with the 16S rRNA in the 70S ribosome. The sequence is that of Large ribosomal subunit protein uL2 from Synechococcus sp. (strain JA-2-3B'a(2-13)) (Cyanobacteria bacterium Yellowstone B-Prime).